A 130-amino-acid chain; its full sequence is Small ribosomal subunit protein uS8 (130 aa).

The protein belongs to the universal ribosomal protein uS8 family. Part of the 30S ribosomal subunit. Contacts proteins S5 and S12.

Functionally, one of the primary rRNA binding proteins, it binds directly to 16S rRNA central domain where it helps coordinate assembly of the platform of the 30S subunit. This is Small ribosomal subunit protein uS8 from Pseudomonas entomophila (strain L48).